Consider the following 493-residue polypeptide: MKYNDLRDFIALLEARGLLKRIKQEIDPHLEMTEICDRTLRAGGPALLFENPRGYTIPVLGNLFGTPERVALGMGQESVSALRDVGKLLAFLKEPEPPKGFKDAWEKLPIFKQVLNMAPKVVGKAPSQEVVLEGDAVNLDQLPIQTCWPGDAGPLVTWPLVVTRGPHKERQNLGIYRMQKIGKNRLIMRWLSHRGGALDFREFQLQHPGKPFPVAVALGADPATILGAVTPVPDTLSEYAFAGLLRGDKTEVVQCIGNDLQVPASAEFILEGFIAPGDMAPEGPFGDHTGYYNEVDKFPVFTVERITHRRDPIYHSTYTGRPPDEPAILGVALNEVFVPILQKQFPEIVDFYLPPEGCSYRMAVVTMKKQYPGHAKRVMMGVWSFLRQFMYTKFVIVTDDDVNARDWKDVIWAMTTRMDPARDTVMVDNTPIDYLDFASPVSGLGSKIGFDATNKWPGETQREWGTPIAMEQAVKDRVDAIWESLGIDLPTAY.

Asn172 is a Mn(2+) binding site. Residues 175 to 177 (IYR), 189 to 191 (RWL), and 194 to 195 (RG) contribute to the prenylated FMN site. Residue Glu238 coordinates Mn(2+). Asp287 functions as the Proton donor in the catalytic mechanism.

This sequence belongs to the UbiD family. In terms of assembly, homohexamer. It depends on prenylated FMN as a cofactor. Requires Mn(2+) as cofactor.

The protein localises to the cell membrane. The catalysed reaction is a 4-hydroxy-3-(all-trans-polyprenyl)benzoate + H(+) = a 2-(all-trans-polyprenyl)phenol + CO2. The protein operates within cofactor biosynthesis; ubiquinone biosynthesis. Its function is as follows. Catalyzes the decarboxylation of 3-octaprenyl-4-hydroxy benzoate to 2-octaprenylphenol, an intermediate step in ubiquinone biosynthesis. In Cellvibrio japonicus (strain Ueda107) (Pseudomonas fluorescens subsp. cellulosa), this protein is 3-octaprenyl-4-hydroxybenzoate carboxy-lyase.